Here is a 379-residue protein sequence, read N- to C-terminus: Cytochrome b (379 aa).

The next 4 helical transmembrane spans lie at 33 to 53 (FGSL…FLAM), 77 to 98 (WLIR…YLHI), 113 to 133 (WNIG…GYVL), and 178 to 198 (FFAF…IHLL). Heme b-binding residues include H83 and H97. H182 and H196 together coordinate heme b. A ubiquinone is bound at residue H201. Helical transmembrane passes span 226 to 246 (YKDL…ALFY), 288 to 308 (LGGV…PILH), 320 to 340 (ASQL…WIGG), and 347 to 367 (YIII…VLNP).

The protein belongs to the cytochrome b family. The cytochrome bc1 complex contains 3 respiratory subunits (MT-CYB, CYC1 and UQCRFS1), 2 core proteins (UQCRC1 and UQCRC2) and probably 6 low-molecular weight proteins. The cofactor is heme b.

Its subcellular location is the mitochondrion inner membrane. In terms of biological role, component of the ubiquinol-cytochrome c reductase complex (complex III or cytochrome b-c1 complex) that is part of the mitochondrial respiratory chain. The b-c1 complex mediates electron transfer from ubiquinol to cytochrome c. Contributes to the generation of a proton gradient across the mitochondrial membrane that is then used for ATP synthesis. The chain is Cytochrome b (mt-cyb) from Anguilla dieffenbachii (New Zealand longfin eel).